Consider the following 217-residue polypeptide: MSPPPAVVTESADGQPEQPPVTAIAEELEKKLQTDEPIVEDVKDDEDDDDDDEEEEDDDAQGVSGSSKQSRSEKKSRKAMLKLGMKPVTGVSRVTIKRTKNVLFFISKPDVFKSPHSETYVIFGEAKIEDLSSQLQTQAAQQFRMPEIGATSQRAEASTATVEAQVEEDEEEIDETGVEARDIDLVMTQAGVSRSKAVKALKSHDGDIVSAIMELTT.

A disordered region spans residues 1–81; the sequence is MSPPPAVVTE…SEKKSRKAML (81 aa). Over residues 37–60 the composition is skewed to acidic residues; that stretch reads PIVEDVKDDEDDDDDDEEEEDDDA. The NAC-A/B domain occupies 70 to 135; the sequence is SRSEKKSRKA…AKIEDLSSQL (66 aa). Positions 178–215 constitute a UBA domain; that stretch reads VEARDIDLVMTQAGVSRSKAVKALKSHDGDIVSAIMEL.

Belongs to the NAC-alpha family.

May promote appropriate targeting of ribosome-nascent polypeptide complexes. This chain is Nascent polypeptide-associated complex subunit alpha-like protein 2, found in Arabidopsis thaliana (Mouse-ear cress).